We begin with the raw amino-acid sequence, 58 residues long: Mu-diguetoxin-Dc1b (58 aa).

4 cysteine pairs are disulfide-bonded: Cys12/Cys26, Cys20/Cys40, Cys25/Cys54, and Cys42/Cys52.

It belongs to the neurotoxin 26 (DTX) family. Expressed by the venom gland.

The protein localises to the secreted. Its function is as follows. Acts by delaying the inactivation of presynaptic voltage-sensitive sodium channels (Nav). Acts against insects and cause a progressive spastic paralysis. The chain is Mu-diguetoxin-Dc1b from Diguetia canities (Desert bush spider).